The following is a 444-amino-acid chain: ATP-dependent protease ATPase subunit HslU (444 aa).

Residues I18 and 60-65 (GVGKTE) contribute to the ATP site. Positions 143-163 (WGEVESHDSHSSTRQAFRKKL) are disordered. ATP-binding residues include D257, E322, and R394.

The protein belongs to the ClpX chaperone family. HslU subfamily. In terms of assembly, a double ring-shaped homohexamer of HslV is capped on each side by a ring-shaped HslU homohexamer. The assembly of the HslU/HslV complex is dependent on binding of ATP.

Its subcellular location is the cytoplasm. Functionally, ATPase subunit of a proteasome-like degradation complex; this subunit has chaperone activity. The binding of ATP and its subsequent hydrolysis by HslU are essential for unfolding of protein substrates subsequently hydrolyzed by HslV. HslU recognizes the N-terminal part of its protein substrates and unfolds these before they are guided to HslV for hydrolysis. This Haemophilus influenzae (strain PittEE) protein is ATP-dependent protease ATPase subunit HslU.